Consider the following 62-residue polypeptide: Large ribosomal subunit protein bL32 (62 aa).

Basic residues predominate over residues 1–18; it reads MGVPKKRTSKMRRDRRRA. Positions 1–22 are disordered; it reads MGVPKKRTSKMRRDRRRAANNN.

Belongs to the bacterial ribosomal protein bL32 family.

The sequence is that of Large ribosomal subunit protein bL32 from Myxococcus xanthus (strain DK1622).